The following is a 399-amino-acid chain: Elongation factor Tu (399 aa).

The region spanning 10–204 (KPHVNIGTIG…AVDASIPEPE (195 aa)) is the tr-type G domain. A G1 region spans residues 19–26 (GHVDHGKT). 19–26 (GHVDHGKT) serves as a coordination point for GTP. Residue T26 coordinates Mg(2+). The G2 stretch occupies residues 60 to 64 (GITIN). Residues 81 to 84 (DCPG) are G3. GTP contacts are provided by residues 81-85 (DCPGH) and 136-139 (NKCD). The G4 stretch occupies residues 136–139 (NKCD). The tract at residues 174-176 (SGL) is G5.

The protein belongs to the TRAFAC class translation factor GTPase superfamily. Classic translation factor GTPase family. EF-Tu/EF-1A subfamily. In terms of assembly, monomer.

The protein localises to the cytoplasm. The enzyme catalyses GTP + H2O = GDP + phosphate + H(+). Its function is as follows. GTP hydrolase that promotes the GTP-dependent binding of aminoacyl-tRNA to the A-site of ribosomes during protein biosynthesis. The chain is Elongation factor Tu from Prochlorococcus marinus (strain AS9601).